Consider the following 217-residue polypeptide: Large ribosomal subunit protein uL3 (217 aa).

The interval 127 to 162 (GFSRGPMSHGSKNHRAPGSTGAGTTPGRIYPGKRMA) is disordered. Positions 142–153 (APGSTGAGTTPG) are enriched in low complexity.

The protein belongs to the universal ribosomal protein uL3 family. In terms of assembly, part of the 50S ribosomal subunit. Forms a cluster with proteins L14 and L19.

Functionally, one of the primary rRNA binding proteins, it binds directly near the 3'-end of the 23S rRNA, where it nucleates assembly of the 50S subunit. The chain is Large ribosomal subunit protein uL3 from Prochlorococcus marinus (strain MIT 9301).